A 248-amino-acid chain; its full sequence is Mannose-binding protein C (248 aa).

The first 20 residues, 1–20 (MSPFLSLPLLLLSVLSASYS), serve as a signal peptide directing secretion. The disordered stretch occupies residues 36–112 (IACSSPGING…GDSSLAASER (77 aa)). Positions 42-99 (GINGFPGKDGRDGTKGEKGEPGQGLRGLQGPPGKLGPPGNPGPSGSPGAKGQKGDPGA) constitute a Collagen-like domain. P47 is modified (4-hydroxyproline). Over residues 49–61 (KDGRDGTKGEKGE) the composition is skewed to basic and acidic residues. 4-hydroxyproline is present on residues P73, P79, P82, and P88. A coiled-coil region spans residues 112–130 (RKALQTEMARIKKWVTFSL). Positions 134-245 (VGKKLFLSNG…CSSSHLAICE (112 aa)) constitute a C-type lectin domain. Cystine bridges form between C155/C244 and C222/C236.

As to quaternary structure, oligomeric complex of 3 or more homotrimers. Interacts with MASP1 and MASP2. Interacts with MEP1A and MEP1B and may inhibit their catalytic activity. Post-translationally, hydroxylation on proline residues within the sequence motif, GXPG, is most likely to be 4-hydroxy as this fits the requirement for 4-hydroxylation in vertebrates.

It localises to the secreted. Calcium-dependent lectin involved in innate immune defense. Binds mannose, fucose and N-acetylglucosamine on different microorganisms and activates the lectin complement pathway. Binds to late apoptotic cells, as well as to apoptotic blebs and to necrotic cells, but not to early apoptotic cells, facilitating their uptake by macrophages. The sequence is that of Mannose-binding protein C (MBL2) from Saguinus oedipus (Cotton-top tamarin).